The sequence spans 492 residues: Cysteine--tRNA ligase (492 aa).

Cysteine 27 serves as a coordination point for Zn(2+). The short motif at 29–39 (VTVYDLCHLGH) is the 'HIGH' region element. 3 residues coordinate Zn(2+): cysteine 211, histidine 236, and glutamate 240. A 'KMSKS' region motif is present at residues 268–272 (KMSKS). Position 271 (lysine 271) interacts with ATP.

It belongs to the class-I aminoacyl-tRNA synthetase family. In terms of assembly, monomer. Zn(2+) serves as cofactor.

Its subcellular location is the cytoplasm. It carries out the reaction tRNA(Cys) + L-cysteine + ATP = L-cysteinyl-tRNA(Cys) + AMP + diphosphate. The chain is Cysteine--tRNA ligase from Prochlorococcus marinus subsp. pastoris (strain CCMP1986 / NIES-2087 / MED4).